The sequence spans 764 residues: MTTAHILGFPRIGAQRELKFALERYWRDGASADAERALVDTGRALRAEHWRIERDAGLDCVTVGDFAWYDHVLTTLAHVGGLPRRFGFDARALTLADYFAAARGNAAQPAMEMTKWFDTNYHYLVPEYSPATTFGPGVEWLFDEVREARALGYRAKAALVGPLTLLWLGKARDGLVERLALLPRLVPAYRALLARLREAGVDWVQIDEPIFSLDLPDAWRDAARPTYEALAPGAPKLLVATYFDDASEHAALLKALPVAGLHVDLVRADAQLDAFVADYPADKVLSCGIVDGRNVWRNDLDRSLARLAPVRDALGERLWVATSCSLLHVPVDLAHEPRLDEELKTWLAFAAQKTREVAALRDALVKGRAAVAAEFDDAAVVAAARRTSARIHNPLVKRRVAALTDADARRASAYSVRAAAQRARFGLPLLPTTTIGSFPQTPEIRRARAAFKQGVLDHLGYLEAMREQVRIAIDKQLAYGLDVLVHGEAERNDMVEYFGELLWGFAITSNGWVQSYGSRCVKPPLVYGDVYLPEPMTVGWASYAQSLSAKPVKGMLTGPVTMLQWSFVRDDQPRATTALQIALALRQETLDLEKAGIGMIQIDEPALREGLPLKARERAAYLDWAVRAFGIAASGVADDTQIHTHMCYSEFGDILPSIAALDADVISIETTRSNMELLDAFETFDYPNEIGPGVYDIHSPRVPDADEIERLILLALERIPAQRLWVNPDCGLKTREWRQVDAALAAMVDAAKRVRQKVEEAAPA.

Residues 16 to 19 and K115 each bind 5-methyltetrahydropteroyltri-L-glutamate; that span reads RELK. L-homocysteine is bound by residues 435-437 and E488; that span reads IGS. L-methionine contacts are provided by residues 435–437 and E488; that span reads IGS. 5-methyltetrahydropteroyltri-L-glutamate contacts are provided by residues 519–520 and W565; that span reads RC. D603 contributes to the L-homocysteine binding site. L-methionine is bound at residue D603. E609 contacts 5-methyltetrahydropteroyltri-L-glutamate. Residues H645, C647, and E669 each contribute to the Zn(2+) site. H698 functions as the Proton donor in the catalytic mechanism. C730 is a Zn(2+) binding site.

This sequence belongs to the vitamin-B12 independent methionine synthase family. Requires Zn(2+) as cofactor.

It catalyses the reaction 5-methyltetrahydropteroyltri-L-glutamate + L-homocysteine = tetrahydropteroyltri-L-glutamate + L-methionine. It participates in amino-acid biosynthesis; L-methionine biosynthesis via de novo pathway; L-methionine from L-homocysteine (MetE route): step 1/1. Functionally, catalyzes the transfer of a methyl group from 5-methyltetrahydrofolate to homocysteine resulting in methionine formation. The polypeptide is 5-methyltetrahydropteroyltriglutamate--homocysteine methyltransferase (Burkholderia mallei (strain NCTC 10247)).